Consider the following 256-residue polypeptide: ATP synthase peripheral stalk subunit b, mitochondrial (256 aa).

The transit peptide at 1-42 (MLSRVVLSAAATAASSLKNAAFLGPGVLQATRTFHTGQPHLA) directs the protein to the mitochondrion. Lysine 131 carries the N6-succinyllysine modification. N6-acetyllysine is present on residues lysine 139, lysine 154, lysine 162, lysine 221, lysine 233, and lysine 244.

This sequence belongs to the eukaryotic ATPase B chain family. Component of the ATP synthase complex composed at least of ATP5F1A/subunit alpha, ATP5F1B/subunit beta, ATP5MC1/subunit c (homooctomer), MT-ATP6/subunit a, MT-ATP8/subunit 8, ATP5ME/subunit e, ATP5MF/subunit f, ATP5MG/subunit g, ATP5MK/subunit k, ATP5MJ/subunit j, ATP5F1C/subunit gamma, ATP5F1D/subunit delta, ATP5F1E/subunit epsilon, ATP5PF/subunit F6, ATP5PB/subunit b, ATP5PD/subunit d, ATP5PO/subunit OSCP. ATP synthase complex consists of a soluble F(1) head domain (subunits alpha(3) and beta(3)) - the catalytic core - and a membrane F(0) domain - the membrane proton channel (subunits c, a, 8, e, f, g, k and j). These two domains are linked by a central stalk (subunits gamma, delta, and epsilon) rotating inside the F1 region and a stationary peripheral stalk (subunits F6, b, d, and OSCP).

It localises to the mitochondrion. Its subcellular location is the mitochondrion inner membrane. Its function is as follows. Subunit b, of the mitochondrial membrane ATP synthase complex (F(1)F(0) ATP synthase or Complex V) that produces ATP from ADP in the presence of a proton gradient across the membrane which is generated by electron transport complexes of the respiratory chain. ATP synthase complex consist of a soluble F(1) head domain - the catalytic core - and a membrane F(1) domain - the membrane proton channel. These two domains are linked by a central stalk rotating inside the F(1) region and a stationary peripheral stalk. During catalysis, ATP synthesis in the catalytic domain of F(1) is coupled via a rotary mechanism of the central stalk subunits to proton translocation. In vivo, can only synthesize ATP although its ATP hydrolase activity can be activated artificially in vitro. Part of the complex F(0) domain. Part of the complex F(0) domain and the peripheric stalk, which acts as a stator to hold the catalytic alpha(3)beta(3) subcomplex and subunit a/ATP6 static relative to the rotary elements. The polypeptide is ATP synthase peripheral stalk subunit b, mitochondrial (Pongo abelii (Sumatran orangutan)).